Consider the following 663-residue polypeptide: UvrABC system protein B (663 aa).

Over residues 1–10 (MIDKRDDKPF) the composition is skewed to basic and acidic residues. The segment at 1–23 (MIDKRDDKPFKLKSKYKPSGDQP) is disordered. Residues 31 to 271 (DNIEGGEKAQ…EQSIAKIQAE (241 aa)) enclose the Helicase ATP-binding domain. Position 44 to 51 (44 to 51 (GATGTGKT)) interacts with ATP. A Beta-hairpin motif is present at residues 97–120 (YYDYYQPEAYVPSSDTYIEKDSSV). One can recognise a Helicase C-terminal domain in the interval 435-601 (QIDDLLGEIN…TIKKDIRGLI (167 aa)). Residues 627 to 662 (KEAINALQKQMQEAAELLDFELAAQMRDLILELKLM) enclose the UVR domain.

This sequence belongs to the UvrB family. In terms of assembly, forms a heterotetramer with UvrA during the search for lesions. Interacts with UvrC in an incision complex.

It localises to the cytoplasm. Its function is as follows. The UvrABC repair system catalyzes the recognition and processing of DNA lesions. A damage recognition complex composed of 2 UvrA and 2 UvrB subunits scans DNA for abnormalities. Upon binding of the UvrA(2)B(2) complex to a putative damaged site, the DNA wraps around one UvrB monomer. DNA wrap is dependent on ATP binding by UvrB and probably causes local melting of the DNA helix, facilitating insertion of UvrB beta-hairpin between the DNA strands. Then UvrB probes one DNA strand for the presence of a lesion. If a lesion is found the UvrA subunits dissociate and the UvrB-DNA preincision complex is formed. This complex is subsequently bound by UvrC and the second UvrB is released. If no lesion is found, the DNA wraps around the other UvrB subunit that will check the other stand for damage. In Streptococcus pyogenes serotype M5 (strain Manfredo), this protein is UvrABC system protein B.